A 261-amino-acid chain; its full sequence is MVETKPKPTEVQKKKTLYEVMFKSREFIIDVYLRFDCFIYLILGGFGFYQPSNLITLLNYSKSDLGLFNNTDSSISNNNNNNNNINTEEQYSTYDNNLLDNQNEFQIDNNNNNNNNEFIPLYQNPILISVVTMYTLMVSLVAIFQCLISLLALIQKEKSTKSILINLSLTLNFFLLLFNTYVLSTQSEIFSKFAYMGLIVSYIISLLDFSALFFLTSKHKSVLSVISSIFSFFLMCLKVRPKLPKLPKLNSNNNNGNKKKK.

5 helical membrane-spanning segments follow: residues 38 to 58, 134 to 154, 163 to 183, 195 to 215, and 219 to 239; these read FIYL…ITLL, YTLM…LALI, ILIN…TYVL, YMGL…LFFL, and HKSV…CLKV.

It localises to the membrane. This is an uncharacterized protein from Dictyostelium discoideum (Social amoeba).